A 166-amino-acid polypeptide reads, in one-letter code: Peptide deformylase (166 aa).

Residues Cys88 and His130 each contribute to the Fe cation site. Glu131 is a catalytic residue. Residue His134 participates in Fe cation binding.

Belongs to the polypeptide deformylase family. The cofactor is Fe(2+).

It carries out the reaction N-terminal N-formyl-L-methionyl-[peptide] + H2O = N-terminal L-methionyl-[peptide] + formate. Removes the formyl group from the N-terminal Met of newly synthesized proteins. Requires at least a dipeptide for an efficient rate of reaction. N-terminal L-methionine is a prerequisite for activity but the enzyme has broad specificity at other positions. This is Peptide deformylase from Caldicellulosiruptor bescii (strain ATCC BAA-1888 / DSM 6725 / KCTC 15123 / Z-1320) (Anaerocellum thermophilum).